The following is a 24-amino-acid chain: Metallothionein (24 aa).

Cd(2+) contacts are provided by cysteine 3, cysteine 5, cysteine 8, cysteine 10, cysteine 17, cysteine 19, and cysteine 22.

This sequence belongs to the metallothionein superfamily. Type 8 family. Post-translationally, contains 4 disulfide bonds.

Its function is as follows. Metallothioneins have a high content of cysteine residues that bind various heavy metals. The protein is Metallothionein of Neonectria lugdunensis (Aquatic fungus).